Reading from the N-terminus, the 324-residue chain is Calmodulin-like protein 12 (324 aa).

EF-hand domains follow at residues 8 to 43 (DQITEYRESFRLFDKNGDGSITKKELGTMMRSIGEK), 44 to 79 (PTKADLQDLMNEADLDGDGTIDFPEFLCVMAKNQGH), 97 to 132 (DQITEYRESFRLFDKNGDGSITKKELRTVMFSLGKN), 133 to 168 (RTKADLQDMMNEVDLDGDGTIDFPEFLYLMAKNQGH), 187 to 222 (DQILEFREAFRVFDKNGDGYITVNELRTTMRSLGET), and 223 to 258 (QTKAELQDMINEADADGDGTISFSEFVCVMTGKMID). Positions 21, 23, 25, 27, 32, 57, 59, 61, 63, 68, 110, 112, 114, 116, 121, 146, 148, 150, 152, 157, 200, 202, 204, 206, 211, 236, 238, 240, 242, and 247 each coordinate Ca(2+).

Belongs to the calmodulin family. Interacts with PID. Binds to ABCG36.

Potential calcium sensor that binds calcium in vitro. The sequence is that of Calmodulin-like protein 12 from Arabidopsis thaliana (Mouse-ear cress).